The primary structure comprises 277 residues: Large ribosomal subunit protein uL2 (277 aa).

Disordered regions lie at residues 36–55 and 213–277; these read PLPKRAGRNNQGKLTVRHHG and WKGI…RKKK.

It belongs to the universal ribosomal protein uL2 family. Part of the 50S ribosomal subunit. Forms a bridge to the 30S subunit in the 70S ribosome.

In terms of biological role, one of the primary rRNA binding proteins. Required for association of the 30S and 50S subunits to form the 70S ribosome, for tRNA binding and peptide bond formation. It has been suggested to have peptidyltransferase activity; this is somewhat controversial. Makes several contacts with the 16S rRNA in the 70S ribosome. In Staphylococcus saprophyticus subsp. saprophyticus (strain ATCC 15305 / DSM 20229 / NCIMB 8711 / NCTC 7292 / S-41), this protein is Large ribosomal subunit protein uL2.